The chain runs to 400 residues: Protein TFG (400 aa).

Position 1 is an N-acetylmethionine (Met1). The region spanning 10 to 91 (KLIIKAQLGE…RILKLTLFVN (82 aa)) is the PB1 domain. The residue at position 50 (Ser50) is a Phosphoserine. Positions 97–124 (LESSQVKYLRRELIELRNKVNRLLDSLE) form a coiled coil. 2 disordered regions span residues 120–160 (LDSL…STQV) and 187–400 (LTDD…PGYR). The span at 150–160 (SDSSGKQSTQV) shows a compositional bias: polar residues. At Ser197 the chain carries Phosphoserine. Low complexity-rich tracts occupy residues 237 to 258 (GQIE…AQQP), 265 to 298 (PQQY…PTSQ), and 307 to 327 (QPQQ…YPAQ). Residues 328 to 340 (TYTAQTSQPTNYT) are compositionally biased toward polar residues. Residues Arg385 and Arg400 each carry the omega-N-methylarginine modification.

In terms of assembly, self-associates to form an oligomeric complex. Interacts with PDCD6; promoting localization and polymerization of TFG at endoplasmic reticulum exit site. Interacts with SEC16B. As to expression, ubiquitous.

The protein resides in the endoplasmic reticulum. Functionally, plays a role in the normal dynamic function of the endoplasmic reticulum (ER) and its associated microtubules. Required for secretory cargo traffic from the endoplasmic reticulum to the Golgi apparatus. The chain is Protein TFG (TFG) from Homo sapiens (Human).